Consider the following 157-residue polypeptide: Class-10 pathogenesis-related protein 1 (157 aa).

It belongs to the BetVI family. High levels in roots and not detectable in hypocotyls, cotyledons, stems, leaves and flower buds of untreated plants. After induction, high levels are present in the vascular bundles of leaves.

It is found in the cytoplasm. This chain is Class-10 pathogenesis-related protein 1 (MSPR10-1), found in Medicago sativa (Alfalfa).